We begin with the raw amino-acid sequence, 236 residues long: tRNA (guanine-N(7)-)-methyltransferase (236 aa).

Residues 1–23 (MEADVQRAQQAQLEKGSSVPPWT) form a disordered region. S-adenosyl-L-methionine contacts are provided by Asp69, Glu94, Asn121, and Asp144. Residue Asp144 is part of the active site. Substrate-binding residues include Lys148 and Asp180.

It belongs to the class I-like SAM-binding methyltransferase superfamily. TrmB family.

It carries out the reaction guanosine(46) in tRNA + S-adenosyl-L-methionine = N(7)-methylguanosine(46) in tRNA + S-adenosyl-L-homocysteine. It participates in tRNA modification; N(7)-methylguanine-tRNA biosynthesis. In terms of biological role, catalyzes the formation of N(7)-methylguanine at position 46 (m7G46) in tRNA. The sequence is that of tRNA (guanine-N(7)-)-methyltransferase from Synechococcus sp. (strain JA-3-3Ab) (Cyanobacteria bacterium Yellowstone A-Prime).